Here is a 168-residue protein sequence, read N- to C-terminus: Photosystem I assembly protein Ycf3 (168 aa).

TPR repeat units follow at residues 35–68 (AFTY…EIDP), 72–105 (SYIL…NPFL), and 120–153 (GEKA…TPGN).

Belongs to the Ycf3 family.

It localises to the plastid membrane. In terms of biological role, essential for the assembly of the photosystem I (PSI) complex. May act as a chaperone-like factor to guide the assembly of the PSI subunits. The chain is Photosystem I assembly protein Ycf3 from Cuscuta exaltata (Tall dodder).